A 96-amino-acid polypeptide reads, in one-letter code: Putative pterin-4-alpha-carbinolamine dehydratase (96 aa).

This sequence belongs to the pterin-4-alpha-carbinolamine dehydratase family.

The catalysed reaction is (4aS,6R)-4a-hydroxy-L-erythro-5,6,7,8-tetrahydrobiopterin = (6R)-L-erythro-6,7-dihydrobiopterin + H2O. The protein is Putative pterin-4-alpha-carbinolamine dehydratase of Metallosphaera sedula (strain ATCC 51363 / DSM 5348 / JCM 9185 / NBRC 15509 / TH2).